A 487-amino-acid chain; its full sequence is Protein SMG9 (487 aa).

Disordered stretches follow at residues 30 to 83 (EDAA…PPAL) and 136 to 164 (RDKGSCSGGAGTAGTSAGAPNALQELQPP). Over residues 42-70 (LKKDRDREQETWDRERDKDRKLERDREAE) the composition is skewed to basic and acidic residues.

It belongs to the SMG9 family.

Involved in nonsense-mediated decay (NMD) of mRNAs containing premature stop codons. Probable component of kinase complex containing nonC and recruited to stalled ribosomes. The chain is Protein SMG9 from Drosophila melanogaster (Fruit fly).